The primary structure comprises 93 residues: Putative septation protein SpoVG (93 aa).

This sequence belongs to the SpoVG family.

Could be involved in septation. In Fusobacterium nucleatum subsp. nucleatum (strain ATCC 25586 / DSM 15643 / BCRC 10681 / CIP 101130 / JCM 8532 / KCTC 2640 / LMG 13131 / VPI 4355), this protein is Putative septation protein SpoVG.